The chain runs to 398 residues: MTPAWATEKPTALLVLADGTVIEGRGLGATGSAVAEVCFNTALTGYQEILTDPSYAGQIVTFTFPHIGNIGTNGEDIEDLNPAARAGAVGAVFKADVTNPSNYRAAGHLDQWLKKRGIVALSGIDTRALTALIREKGMPNAVIAHAPDGVFDLDDLKQRAAAWSGLIGLDLAKEVTSGQSSVWRETPWVWNEGFGEQAEPSLHVVAIDYGVKRNILRLLAGLGAKVTVVPANTGSEEILAMQPDGIFLSNGPGDPEATGDYAVPVIQDLLKTDIPVFGICLGHQMLALALGGRTAKMHQGHHGANHPVKDHTTGKVEIVSMNHGFAVDADSLPEGVEETHVSLFDGSNCGIALTGRPVFSVQHHPEASPGPQDSHYLFRRFVNLIREKRGEEQLAERV.

The interval 1 to 199 is CPSase; the sequence is MTPAWATEKP…WNEGFGEQAE (199 aa). Residues S54, G251, and G253 each coordinate L-glutamine. Positions 203 to 391 constitute a Glutamine amidotransferase type-1 domain; that stretch reads HVVAIDYGVK…VNLIREKRGE (189 aa). C280 functions as the Nucleophile in the catalytic mechanism. L-glutamine is bound by residues L281, Q284, N322, G324, and F325. Catalysis depends on residues H364 and E366.

It belongs to the CarA family. Composed of two chains; the small (or glutamine) chain promotes the hydrolysis of glutamine to ammonia, which is used by the large (or ammonia) chain to synthesize carbamoyl phosphate. Tetramer of heterodimers (alpha,beta)4.

The enzyme catalyses hydrogencarbonate + L-glutamine + 2 ATP + H2O = carbamoyl phosphate + L-glutamate + 2 ADP + phosphate + 2 H(+). It catalyses the reaction L-glutamine + H2O = L-glutamate + NH4(+). It functions in the pathway amino-acid biosynthesis; L-arginine biosynthesis; carbamoyl phosphate from bicarbonate: step 1/1. It participates in pyrimidine metabolism; UMP biosynthesis via de novo pathway; (S)-dihydroorotate from bicarbonate: step 1/3. Small subunit of the glutamine-dependent carbamoyl phosphate synthetase (CPSase). CPSase catalyzes the formation of carbamoyl phosphate from the ammonia moiety of glutamine, carbonate, and phosphate donated by ATP, constituting the first step of 2 biosynthetic pathways, one leading to arginine and/or urea and the other to pyrimidine nucleotides. The small subunit (glutamine amidotransferase) binds and cleaves glutamine to supply the large subunit with the substrate ammonia. The sequence is that of Carbamoyl phosphate synthase small chain from Mesorhizobium japonicum (strain LMG 29417 / CECT 9101 / MAFF 303099) (Mesorhizobium loti (strain MAFF 303099)).